Here is a 454-residue protein sequence, read N- to C-terminus: tRNA modification GTPase MnmE (454 aa).

(6S)-5-formyl-5,6,7,8-tetrahydrofolate-binding residues include Arg-23, Glu-80, and Lys-120. The TrmE-type G domain maps to 216–377; it reads GMKVVIAGRP…LRNHLKQSMG (162 aa). Residue Asn-226 participates in K(+) binding. GTP-binding positions include 226–231, 245–251, 270–273, 335–338, and 358–360; these read NAGKSS, TDIAGTT, DTAG, NKAD, and SAR. Ser-230 lines the Mg(2+) pocket. The K(+) site is built by Thr-245, Ile-247, and Thr-250. Residue Thr-251 participates in Mg(2+) binding. A (6S)-5-formyl-5,6,7,8-tetrahydrofolate-binding site is contributed by Lys-454.

Belongs to the TRAFAC class TrmE-Era-EngA-EngB-Septin-like GTPase superfamily. TrmE GTPase family. As to quaternary structure, homodimer. Heterotetramer of two MnmE and two MnmG subunits. Requires K(+) as cofactor.

The protein resides in the cytoplasm. Its function is as follows. Exhibits a very high intrinsic GTPase hydrolysis rate. Involved in the addition of a carboxymethylaminomethyl (cmnm) group at the wobble position (U34) of certain tRNAs, forming tRNA-cmnm(5)s(2)U34. This is tRNA modification GTPase MnmE from Escherichia coli O139:H28 (strain E24377A / ETEC).